We begin with the raw amino-acid sequence, 257 residues long: Hydroxyacylglutathione hydrolase (257 aa).

Zn(2+) is bound by residues His-56, His-58, Asp-60, His-61, His-112, Asp-131, and His-169.

It belongs to the metallo-beta-lactamase superfamily. Glyoxalase II family. In terms of assembly, monomer. Zn(2+) serves as cofactor.

It catalyses the reaction an S-(2-hydroxyacyl)glutathione + H2O = a 2-hydroxy carboxylate + glutathione + H(+). It participates in secondary metabolite metabolism; methylglyoxal degradation; (R)-lactate from methylglyoxal: step 2/2. Its function is as follows. Thiolesterase that catalyzes the hydrolysis of S-D-lactoyl-glutathione to form glutathione and D-lactic acid. The protein is Hydroxyacylglutathione hydrolase of Ectopseudomonas mendocina (strain ymp) (Pseudomonas mendocina).